A 933-amino-acid polypeptide reads, in one-letter code: Dual 3',5'-cyclic-AMP and -GMP phosphodiesterase 11A (933 aa).

The interval 42–121 (HTSGQGASSL…LQRRASQKEL (80 aa)) is disordered. Phosphoserine occurs at positions 162, 163, and 239. GAF domains are found at residues 217–370 (DLTS…GIAI) and 402–558 (DLEK…GLGI). Ser-424 contributes to the 3',5'-cyclic GMP binding site. Positions 588–912 (SKAEVDKFKA…RKWEELHQKR (325 aa)) constitute a PDEase domain. The Proton donor role is filled by His-664. Positions 668, 704, 705, and 816 each coordinate a divalent metal cation. The tract at residues 913–933 (LQVSAASPDPASPMVAGEDRL) is disordered.

Belongs to the cyclic nucleotide phosphodiesterase family. Requires a divalent metal cation as cofactor. As to expression, expressed in testis and developing spermatoza.

Its subcellular location is the cytoplasm. It is found in the cytosol. It catalyses the reaction 3',5'-cyclic GMP + H2O = GMP + H(+). The catalysed reaction is 3',5'-cyclic AMP + H2O = AMP + H(+). Inhibited by 3-isobutyl-1-methylxanthine (IBMX), zaprinast and dipyridamole. cGMP acts as an allosteric activator. In terms of biological role, plays a role in signal transduction by regulating the intracellular concentration of cyclic nucleotides cAMP and cGMP. Catalyzes the hydrolysis of both cAMP and cGMP to 5'-AMP and 5'-GMP, respectively. The protein is Dual 3',5'-cyclic-AMP and -GMP phosphodiesterase 11A (Pde11a) of Mus musculus (Mouse).